The sequence spans 483 residues: Teichuronic acid biosynthesis protein TuaB (483 aa).

11 helical membrane passes run 15-34 (TSIS…ALLG), 41-63 (EFGL…DMGF), 83-105 (WLNI…VIAG), 112-134 (LVFL…QYQY), 154-176 (VLSF…YVIS), 294-316 (LALV…ITAV), 321-343 (WLAA…LMNP), 356-378 (LAFY…AVQT), 382-404 (LTVA…WLLA), 411-433 (LSAY…IIAF), and 448-470 (MRLA…KAYP).

The protein belongs to the polysaccharide synthase family.

It is found in the cell membrane. It functions in the pathway cell wall biogenesis; teichuronic acid biosynthesis. In terms of biological role, might be involved in the translocation of teichuronic acid repeating units from the inner to the outer surface of the membrane. The protein is Teichuronic acid biosynthesis protein TuaB (tuaB) of Bacillus subtilis (strain 168).